Reading from the N-terminus, the 102-residue chain is Large ribosomal subunit protein bL21 (102 aa).

This sequence belongs to the bacterial ribosomal protein bL21 family. Part of the 50S ribosomal subunit. Contacts protein L20.

In terms of biological role, this protein binds to 23S rRNA in the presence of protein L20. This is Large ribosomal subunit protein bL21 from Bacillus pumilus (strain SAFR-032).